The chain runs to 265 residues: Sulfur carrier protein FdhD (265 aa).

Cysteine 107 serves as the catalytic Cysteine persulfide intermediate.

It belongs to the FdhD family.

The protein resides in the cytoplasm. Its function is as follows. Required for formate dehydrogenase (FDH) activity. Acts as a sulfur carrier protein that transfers sulfur from IscS to the molybdenum cofactor prior to its insertion into FDH. The sequence is that of Sulfur carrier protein FdhD from Staphylococcus aureus (strain JH9).